The sequence spans 636 residues: Chaperone protein DnaK (636 aa).

At Thr-197 the chain carries Phosphothreonine; by autocatalysis. Residues 596–607 are compositionally biased toward low complexity; that stretch reads LYQQAQEQQQSG. Positions 596–636 are disordered; the sequence is LYQQAQEQQQSGSSGGSSDEDVVEDAEIVDEEDEEKRDDNR. Acidic residues predominate over residues 613-636; that stretch reads SDEDVVEDAEIVDEEDEEKRDDNR.

It belongs to the heat shock protein 70 family.

In terms of biological role, acts as a chaperone. This is Chaperone protein DnaK from Rubrobacter xylanophilus (strain DSM 9941 / JCM 11954 / NBRC 16129 / PRD-1).